We begin with the raw amino-acid sequence, 294 residues long: Thymidylate synthase 1/2 (294 aa).

Residues Arg-29 and 154–155 (RR) contribute to the dUMP site. Catalysis depends on Cys-174, which acts as the Nucleophile. DUMP-binding positions include 194 to 197 (RSGD), Asn-205, and 235 to 237 (HVY). Asp-197 is a binding site for (6R)-5,10-methylene-5,6,7,8-tetrahydrofolate.

The protein belongs to the thymidylate synthase family.

The enzyme catalyses dUMP + (6R)-5,10-methylene-5,6,7,8-tetrahydrofolate = 7,8-dihydrofolate + dTMP. The protein operates within pyrimidine metabolism; dTTP biosynthesis. The sequence is that of Thymidylate synthase 1/2 (TS-1) from Encephalitozoon cuniculi (strain GB-M1) (Microsporidian parasite).